Reading from the N-terminus, the 298-residue chain is Bifunctional methyltransferase/endonuclease (298 aa).

The probable methylated-DNA--protein-cysteine methyltransferase stretch occupies residues 1–79; sequence MQSIDLYSYL…SLGIDEKIRR (79 aa). Residue Cys-56 is part of the active site. Residues 80-298 form an endonuclease V region; it reads LRNDGIEINN…TVALRRNNII (219 aa). 2 residues coordinate Mg(2+): Asp-137 and Asp-197.

It in the N-terminal section; belongs to the MGMT family. The protein in the C-terminal section; belongs to the endonuclease V family. Mg(2+) serves as cofactor.

Its subcellular location is the cytoplasm. The enzyme catalyses Endonucleolytic cleavage at apurinic or apyrimidinic sites to products with a 5'-phosphate.. DNA repair enzyme involved in the repair of deaminated bases. Selectively cleaves double-stranded DNA at the second phosphodiester bond 3' to a deoxyinosine leaving behind the intact lesion on the nicked DNA. This Picrophilus torridus (strain ATCC 700027 / DSM 9790 / JCM 10055 / NBRC 100828 / KAW 2/3) protein is Bifunctional methyltransferase/endonuclease.